We begin with the raw amino-acid sequence, 102 residues long: uncharacterized protein (102 aa).

2 disordered regions span residues 1-21 (MKRM…GAGE) and 33-71 (GSGT…SACT). The Extracellular portion of the chain corresponds to 1–79 (MKRMIRSHGR…CTRTDHQKAD (79 aa)). Residues 56–71 (SSGTRRGSANETSACT) are compositionally biased toward polar residues. N-linked (GlcNAc...) asparagine; by host glycosylation occurs at Asn65. Residues 80 to 97 (IGLWFMFLVFGLCSWLAM) form a helical membrane-spanning segment. The Cytoplasmic portion of the chain corresponds to 98–102 (RYRAQ).

It belongs to the HHV-5 UL15A protein family.

Its subcellular location is the host membrane. This is an uncharacterized protein from Human cytomegalovirus (strain Merlin) (HHV-5).